A 203-amino-acid polypeptide reads, in one-letter code: DNA-directed RNA polymerase subunit gamma (203 aa).

Residues C34, C36, C49, and C52 each contribute to the Zn(2+) site.

It belongs to the RNA polymerase beta' chain family. RpoC1 subfamily. In cyanobacteria the RNAP catalytic core is composed of 2 alpha, 1 beta, 1 beta', 1 gamma and 1 omega subunit. When a sigma factor is associated with the core the holoenzyme is formed, which can initiate transcription. Zn(2+) is required as a cofactor.

It catalyses the reaction RNA(n) + a ribonucleoside 5'-triphosphate = RNA(n+1) + diphosphate. Functionally, DNA-dependent RNA polymerase catalyzes the transcription of DNA into RNA using the four ribonucleoside triphosphates as substrates. The polypeptide is DNA-directed RNA polymerase subunit gamma (rpoC1) (Fischerella muscicola).